We begin with the raw amino-acid sequence, 908 residues long: Adhesion G-protein coupled receptor F1 (908 aa).

The N-terminal stretch at 1 to 20 is a signal peptide; the sequence is MRIGLLWLVPLFTLTEGTDG. Over 21–588 the chain is Extracellular; it reads FLQQKNDGRR…VVPVVKWITY (568 aa). Residues N133, N167, N328, N353, N367, N388, N422, N453, N510, N519, N526, and N551 are each glycosylated (N-linked (GlcNAc...) asparagine). Positions 147 to 255 constitute an SEA domain; that stretch reads ERAKVWGTFE…GSFRVFGKAP (109 aa). The region spanning 434–577 is the GAIN-B domain; it reads PVTQIQSTRG…SMLMSPFVPS (144 aa). 2 cysteine pairs are disulfide-bonded: C532/C559 and C547/C561. Residues 532–577 form a GPS region; that stretch reads CVFWDFSQLQWSNAGCQLVNETLDTVLCRCSHLTSFSMLMSPFVPS. The tract at residues 566 to 574 is stachel; that stretch reads SFSMLMSPF. A helical transmembrane segment spans residues 589-609; it reads IGLSISIASLILCLIIESLFW. Topologically, residues 610–622 are cytoplasmic; sequence KQTKRSQTSYTRN. Residues 623-643 form a helical membrane-spanning segment; that stretch reads ICLVNIAVSLLIADVWFIIAA. The Extracellular segment spans residues 644-658; sequence TVDPSVSPSGVCVAA. C655 and C731 are joined by a disulfide. A helical transmembrane segment spans residues 659–679; that stretch reads VFFTHFFYLAVFFWMLVLGIL. Residues 680–697 lie on the Cytoplasmic side of the membrane; it reads LAYRIILVFHHMALTTMM. Residues 698-718 traverse the membrane as a helical segment; that stretch reads AIGFCLGYGCPLLISIITLAV. At 719–742 the chain is on the extracellular side; that stretch reads TQPSNSYKRNDVCWLNWSDKSKPL. An N-linked (GlcNAc...) asparagine glycan is attached at N734. The helical transmembrane segment at 743 to 763 threads the bilayer; sequence LAFVVPALTIVAVNLVVVLLV. The Cytoplasmic segment spans residues 764 to 789; the sequence is LRKLWRPAVGERLNQDDKATAIRMGK. The helical transmembrane segment at 790 to 810 threads the bilayer; the sequence is SLLVLTPLLGLTWGFGIGTMA. Residues 811–818 lie on the Extracellular side of the membrane; sequence NSHNLAWH. Residues 819-839 form a helical membrane-spanning segment; that stretch reads VLFALLNAFQGFFIFCFGILL. At 840–908 the chain is on the cytoplasmic side; that stretch reads DTKLRQLLSN…ITLTQFLSTE (69 aa).

The protein belongs to the G-protein coupled receptor 2 family. Adhesion G-protein coupled receptor (ADGR) subfamily. As to quaternary structure, heterodimer of 2 chains generated by proteolytic processing; the large extracellular N-terminal fragment and the membrane-bound C-terminal fragment predominantly remain associated and non-covalently linked. Autoproteolytically processed at the GPS region of the GAIN-B domain; this cleavage modulates receptor activity. Expressed in liver, kidney and adrenal gland. In kidney strong expression in the renal pelvis and the ureter.

The protein localises to the cell membrane. Its activity is regulated as follows. Forms a heterodimer of 2 chains generated by proteolytic processing that remain associated through non-covalent interactions mediated by the GAIN-B domain. In the inactivated receptor, the Stachel sequence (also named stalk) is embedded in the GAIN-B domain, where it adopts a beta-strand conformation. On activation, the Stachel moves into the 7 transmembrane region and adopts a twisted hook-shaped configuration that forms contacts within the receptor, leading to coupling of a G-alpha protein, which activates signaling. The cleaved GAIN-B and N-terminal domains can then dissociate from the rest of the receptor. Its function is as follows. Adhesion G-protein coupled receptor (aGPCR) for N-docosahexaenoylethanolamine (synaptamide), an omega-3 fatty acid lipid highly enriched in the brain. Ligand binding causes a conformation change that triggers signaling via guanine nucleotide-binding proteins (G proteins) and modulates the activity of downstream effectors, such as adenylate cyclase. ADGRF1 is coupled to G(s) G proteins and mediates activation of adenylate cyclase activity. Also able to couple to G(q), G(i) and G(12)/G(13) G proteins; additional evidence is however required to confirm this result in vivo. Involved in the development of neurons and cognitive function. In liver, involved in fat accumulation. This chain is Adhesion G-protein coupled receptor F1, found in Mus musculus (Mouse).